The following is a 375-amino-acid chain: Chaperone protein DnaJ (375 aa).

The 65-residue stretch at 5-69 folds into the J domain; that stretch reads DYYEILGVSK…QKRAAYDQYG (65 aa). A CR-type zinc finger spans residues 130 to 208; it reads GVTKEIRIPT…CHGHGRVEKA (79 aa). Zn(2+)-binding residues include Cys143, Cys146, Cys160, Cys163, Cys182, Cys185, Cys196, and Cys199. CXXCXGXG motif repeat units follow at residues 143-150, 160-167, 182-189, and 196-203; these read CGVCHGSG, CPTCHGQG, CPHCHGRG, and CNSCHGHG.

It belongs to the DnaJ family. In terms of assembly, homodimer. It depends on Zn(2+) as a cofactor.

It is found in the cytoplasm. Participates actively in the response to hyperosmotic and heat shock by preventing the aggregation of stress-denatured proteins and by disaggregating proteins, also in an autonomous, DnaK-independent fashion. Unfolded proteins bind initially to DnaJ; upon interaction with the DnaJ-bound protein, DnaK hydrolyzes its bound ATP, resulting in the formation of a stable complex. GrpE releases ADP from DnaK; ATP binding to DnaK triggers the release of the substrate protein, thus completing the reaction cycle. Several rounds of ATP-dependent interactions between DnaJ, DnaK and GrpE are required for fully efficient folding. Also involved, together with DnaK and GrpE, in the DNA replication of plasmids through activation of initiation proteins. This chain is Chaperone protein DnaJ, found in Serratia proteamaculans (strain 568).